The chain runs to 249 residues: DNA polymerase sliding clamp (249 aa).

This sequence belongs to the PCNA family. As to quaternary structure, homotrimer. The subunits circularize to form a toroid; DNA passes through its center. Replication factor C (RFC) is required to load the toroid on the DNA.

Its function is as follows. Sliding clamp subunit that acts as a moving platform for DNA processing. Responsible for tethering the catalytic subunit of DNA polymerase and other proteins to DNA during high-speed replication. The chain is DNA polymerase sliding clamp from Thermococcus sibiricus (strain DSM 12597 / MM 739).